Here is a 100-residue protein sequence, read N- to C-terminus: MRKMMQREVTYTTAQLARMKMVDGEVTAEVLEPVTLIGNLSVEQAQREINKRSEFKENPAQVVGVEANTQLYELPLDVFLEHATVKERPATKEEVAEVQA.

Residues M1–M19 mediate DNA binding.

In terms of assembly, homodimer. Homomultimer. Binds to double-stranded DNA giving rise to multimeric nucleoprotein complexes.

Functionally, histone-like nucleoprotein that binds to the viral dsDNA and responsible for wrapping and condensing the viral DNA about 4-fold. Forms a nucleoprotein complex in which the DNA adopts a right-handed toroidal conformation winding around a protein core. Binding specificity for the viral genome is based on supercoiling. The formation of the nucleoprotein complex at the genome ends, for which the binding affinity is highest, activates the initiation of viral DNA replication. The binding of p6 would recruit the complex formed by the TP and the DNA polymerase to the origin. Protein p6 is also involved in the early to late transcription switch. In Bacillus phage Nf (Bacteriophage Nf), this protein is Double-stranded DNA-binding protein.